Here is a 170-residue protein sequence, read N- to C-terminus: Large ribosomal subunit protein uL6m (170 aa).

It belongs to the universal ribosomal protein uL6 family.

Its subcellular location is the mitochondrion. In Dictyostelium discoideum (Social amoeba), this protein is Large ribosomal subunit protein uL6m (mrpl6).